The chain runs to 196 residues: UPF0134 protein MPN_501 (196 aa).

This sequence belongs to the UPF0134 family.

The sequence is that of UPF0134 protein MPN_501 from Mycoplasma pneumoniae (strain ATCC 29342 / M129 / Subtype 1) (Mycoplasmoides pneumoniae).